A 611-amino-acid chain; its full sequence is BTB/POZ domain-containing protein 9 (611 aa).

The BTB domain maps to 36 to 104 (GDVTFVVEKK…IYTGRATLTD (69 aa)). The BACK domain occupies 142–240 (VCMTFDVASL…SLTELLNVVR (99 aa)). A disordered region spans residues 560 to 611 (QSAQKDSSDEPGTGGASAAGQQLDPHALQAPSGSSLPSSPGSNSRSPNRQHQ). Residues 586–611 (ALQAPSGSSLPSSPGSNSRSPNRQHQ) show a composition bias toward low complexity.

The chain is BTB/POZ domain-containing protein 9 (BTBD9) from Bos taurus (Bovine).